The following is a 123-amino-acid chain: EKC/KEOPS complex subunit GON7 (123 aa).

The tract at residues 1–63 is disordered; the sequence is MKLPVAQYSA…EPERTKDGSQ (63 aa). Positions 47-60 are enriched in basic and acidic residues; the sequence is IDRDKPSEPERTKD.

It belongs to the GON7 family. As to quaternary structure, component of the EKC/KEOPS complex composed of at least BUD32, CGI121, GON7, KAE1 and PCC1; the whole complex dimerizes.

The protein localises to the nucleus. It is found in the chromosome. The protein resides in the telomere. Its function is as follows. Component of the EKC/KEOPS complex that is required for the formation of a threonylcarbamoyl group on adenosine at position 37 (t(6)A37) in tRNAs that read codons beginning with adenine. The complex is probably involved in the transfer of the threonylcarbamoyl moiety of threonylcarbamoyl-AMP (TC-AMP) to the N6 group of A37. GON7 likely plays a supporting role to the catalytic subunit KAE1 in the complex. The EKC/KEOPS complex also promotes both telomere uncapping and telomere elongation. The complex is required for efficient recruitment of transcriptional coactivators. The polypeptide is EKC/KEOPS complex subunit GON7 (GON7) (Saccharomyces cerevisiae (strain ATCC 204508 / S288c) (Baker's yeast)).